Consider the following 242-residue polypeptide: Type III pantothenate kinase (242 aa).

Position 6–13 (6–13 (DAGNTRLK)) interacts with ATP. Residues Tyr90 and 97–100 (GADR) contribute to the substrate site. Asp99 functions as the Proton acceptor in the catalytic mechanism. Asp119 contacts K(+). Ser122 contacts ATP. Residue Thr174 coordinates substrate.

It belongs to the type III pantothenate kinase family. As to quaternary structure, homodimer. NH4(+) serves as cofactor. Requires K(+) as cofactor.

The protein localises to the cytoplasm. The catalysed reaction is (R)-pantothenate + ATP = (R)-4'-phosphopantothenate + ADP + H(+). The protein operates within cofactor biosynthesis; coenzyme A biosynthesis; CoA from (R)-pantothenate: step 1/5. Its function is as follows. Catalyzes the phosphorylation of pantothenate (Pan), the first step in CoA biosynthesis. This chain is Type III pantothenate kinase, found in Marinobacter nauticus (strain ATCC 700491 / DSM 11845 / VT8) (Marinobacter aquaeolei).